The sequence spans 115 residues: NADH-ubiquinone oxidoreductase chain 3 (115 aa).

Helical transmembrane passes span 4-24 (FIVM…AFWL), 55-75 (FFLV…LLPL), and 86-106 (ITML…AYEW).

Belongs to the complex I subunit 3 family. In terms of assembly, core subunit of respiratory chain NADH dehydrogenase (Complex I) which is composed of 45 different subunits. Interacts with TMEM186. Interacts with TMEM242.

The protein localises to the mitochondrion inner membrane. The catalysed reaction is a ubiquinone + NADH + 5 H(+)(in) = a ubiquinol + NAD(+) + 4 H(+)(out). Its function is as follows. Core subunit of the mitochondrial membrane respiratory chain NADH dehydrogenase (Complex I) which catalyzes electron transfer from NADH through the respiratory chain, using ubiquinone as an electron acceptor. Essential for the catalytic activity of complex I. The polypeptide is NADH-ubiquinone oxidoreductase chain 3 (Reithrodontomys fulvescens (Fulvous harvest mouse)).